A 149-amino-acid chain; its full sequence is Large ribosomal subunit protein eL8 (149 aa).

This sequence belongs to the eukaryotic ribosomal protein eL8 family. In terms of assembly, part of the 50S ribosomal subunit. Probably part of the RNase P complex.

Its subcellular location is the cytoplasm. Its function is as follows. Multifunctional RNA-binding protein that recognizes the K-turn motif in ribosomal RNA, the RNA component of RNase P, box H/ACA, box C/D and box C'/D' sRNAs. The sequence is that of Large ribosomal subunit protein eL8 from Pyrobaculum calidifontis (strain DSM 21063 / JCM 11548 / VA1).